The sequence spans 189 residues: Peptidyl-tRNA hydrolase (189 aa).

Tyr-14 lines the tRNA pocket. The active-site Proton acceptor is His-19. Residues Phe-64, Asn-66, and Asn-112 each coordinate tRNA.

It belongs to the PTH family. As to quaternary structure, monomer.

The protein resides in the cytoplasm. It catalyses the reaction an N-acyl-L-alpha-aminoacyl-tRNA + H2O = an N-acyl-L-amino acid + a tRNA + H(+). Hydrolyzes ribosome-free peptidyl-tRNAs (with 1 or more amino acids incorporated), which drop off the ribosome during protein synthesis, or as a result of ribosome stalling. Its function is as follows. Catalyzes the release of premature peptidyl moieties from peptidyl-tRNA molecules trapped in stalled 50S ribosomal subunits, and thus maintains levels of free tRNAs and 50S ribosomes. The protein is Peptidyl-tRNA hydrolase of Zymomonas mobilis subsp. mobilis (strain ATCC 31821 / ZM4 / CP4).